A 380-amino-acid chain; its full sequence is Putative glutamate--cysteine ligase 2-2 (380 aa).

The protein belongs to the glutamate--cysteine ligase type 2 family. YbdK subfamily.

The enzyme catalyses L-cysteine + L-glutamate + ATP = gamma-L-glutamyl-L-cysteine + ADP + phosphate + H(+). Functionally, ATP-dependent carboxylate-amine ligase which exhibits weak glutamate--cysteine ligase activity. This chain is Putative glutamate--cysteine ligase 2-2, found in Nocardia farcinica (strain IFM 10152).